The sequence spans 337 residues: Glyceraldehyde-3-phosphate dehydrogenase (337 aa).

Residues 12–13 (RI), aspartate 34, and lysine 79 each bind NAD(+). Residues 150 to 152 (SCT), threonine 181, 210 to 211 (TG), and arginine 233 contribute to the D-glyceraldehyde 3-phosphate site. Cysteine 151 acts as the Nucleophile in catalysis. Asparagine 315 lines the NAD(+) pocket.

It belongs to the glyceraldehyde-3-phosphate dehydrogenase family. Homotetramer.

The protein localises to the cytoplasm. It catalyses the reaction D-glyceraldehyde 3-phosphate + phosphate + NAD(+) = (2R)-3-phospho-glyceroyl phosphate + NADH + H(+). Its pathway is carbohydrate degradation; glycolysis; pyruvate from D-glyceraldehyde 3-phosphate: step 1/5. In Cochliobolus lunatus (Filamentous fungus), this protein is Glyceraldehyde-3-phosphate dehydrogenase (GPD).